Reading from the N-terminus, the 184-residue chain is Lipocalin-15 (184 aa).

Residues 1–20 form the signal peptide; sequence MMSFLLGAILTLLWAPTAQA. Cysteines 83 and 176 form a disulfide.

It belongs to the calycin superfamily. Lipocalin family.

Its subcellular location is the secreted. The protein is Lipocalin-15 (LCN15) of Homo sapiens (Human).